The chain runs to 127 residues: Large ribosomal subunit protein uL18 (127 aa).

The protein belongs to the universal ribosomal protein uL18 family. Part of the 50S ribosomal subunit; part of the 5S rRNA/L5/L18/L25 subcomplex. Contacts the 5S and 23S rRNAs.

Its function is as follows. This is one of the proteins that bind and probably mediate the attachment of the 5S RNA into the large ribosomal subunit, where it forms part of the central protuberance. In Streptomyces griseus subsp. griseus (strain JCM 4626 / CBS 651.72 / NBRC 13350 / KCC S-0626 / ISP 5235), this protein is Large ribosomal subunit protein uL18.